The sequence spans 265 residues: 3-methyl-2-oxobutanoate hydroxymethyltransferase (265 aa).

Asp-45 and Asp-84 together coordinate Mg(2+). 3-methyl-2-oxobutanoate-binding positions include 45–46, Asp-84, and Lys-112; that span reads DS. A Mg(2+)-binding site is contributed by Glu-114. Glu-181 functions as the Proton acceptor in the catalytic mechanism.

This sequence belongs to the PanB family. As to quaternary structure, homodecamer; pentamer of dimers. Requires Mg(2+) as cofactor.

It localises to the cytoplasm. The enzyme catalyses 3-methyl-2-oxobutanoate + (6R)-5,10-methylene-5,6,7,8-tetrahydrofolate + H2O = 2-dehydropantoate + (6S)-5,6,7,8-tetrahydrofolate. The protein operates within cofactor biosynthesis; (R)-pantothenate biosynthesis; (R)-pantoate from 3-methyl-2-oxobutanoate: step 1/2. Catalyzes the reversible reaction in which hydroxymethyl group from 5,10-methylenetetrahydrofolate is transferred onto alpha-ketoisovalerate to form ketopantoate. This chain is 3-methyl-2-oxobutanoate hydroxymethyltransferase, found in Yersinia pestis bv. Antiqua (strain Antiqua).